The following is a 249-amino-acid chain: Type III pantothenate kinase (249 aa).

8–15 contacts ATP; sequence DAGNSRLK. Residues Tyr-95 and 102-105 each bind substrate; that span reads GVDR. Asp-104 functions as the Proton acceptor in the catalytic mechanism. Residue Asp-125 coordinates K(+). Thr-128 contributes to the ATP binding site. Thr-179 contributes to the substrate binding site.

Belongs to the type III pantothenate kinase family. As to quaternary structure, homodimer. NH4(+) serves as cofactor. The cofactor is K(+).

It localises to the cytoplasm. It catalyses the reaction (R)-pantothenate + ATP = (R)-4'-phosphopantothenate + ADP + H(+). The protein operates within cofactor biosynthesis; coenzyme A biosynthesis; CoA from (R)-pantothenate: step 1/5. Its function is as follows. Catalyzes the phosphorylation of pantothenate (Pan), the first step in CoA biosynthesis. This is Type III pantothenate kinase from Alkalilimnicola ehrlichii (strain ATCC BAA-1101 / DSM 17681 / MLHE-1).